Here is a 95-residue protein sequence, read N- to C-terminus: Aspartyl/glutamyl-tRNA(Asn/Gln) amidotransferase subunit C (95 aa).

Belongs to the GatC family. In terms of assembly, heterotrimer of A, B and C subunits.

The enzyme catalyses L-glutamyl-tRNA(Gln) + L-glutamine + ATP + H2O = L-glutaminyl-tRNA(Gln) + L-glutamate + ADP + phosphate + H(+). It carries out the reaction L-aspartyl-tRNA(Asn) + L-glutamine + ATP + H2O = L-asparaginyl-tRNA(Asn) + L-glutamate + ADP + phosphate + 2 H(+). Allows the formation of correctly charged Asn-tRNA(Asn) or Gln-tRNA(Gln) through the transamidation of misacylated Asp-tRNA(Asn) or Glu-tRNA(Gln) in organisms which lack either or both of asparaginyl-tRNA or glutaminyl-tRNA synthetases. The reaction takes place in the presence of glutamine and ATP through an activated phospho-Asp-tRNA(Asn) or phospho-Glu-tRNA(Gln). In Xanthobacter autotrophicus (strain ATCC BAA-1158 / Py2), this protein is Aspartyl/glutamyl-tRNA(Asn/Gln) amidotransferase subunit C.